The sequence spans 190 residues: Small ribosomal subunit protein eS7 (190 aa).

Belongs to the eukaryotic ribosomal protein eS7 family. Component of the small ribosomal subunit. Part of the small subunit (SSU) processome, composed of more than 70 proteins and the RNA chaperone small nucleolar RNA (snoRNA) U3.

It localises to the cytoplasm. The protein localises to the cytoskeleton. Its subcellular location is the microtubule organizing center. The protein resides in the centrosome. It is found in the nucleus. It localises to the nucleolus. In terms of biological role, component of the small ribosomal subunit. The ribosome is a large ribonucleoprotein complex responsible for the synthesis of proteins in the cell. Required for rRNA maturation. Part of the small subunit (SSU) processome, first precursor of the small eukaryotic ribosomal subunit. During the assembly of the SSU processome in the nucleolus, many ribosome biogenesis factors, an RNA chaperone and ribosomal proteins associate with the nascent pre-rRNA and work in concert to generate RNA folding, modifications, rearrangements and cleavage as well as targeted degradation of pre-ribosomal RNA by the RNA exosome. This is Small ribosomal subunit protein eS7 (RpS7) from Spodoptera frugiperda (Fall armyworm).